The chain runs to 1227 residues: ATP-dependent helicase/nuclease subunit A (1227 aa).

Residues 3-477 form the UvrD-like helicase ATP-binding domain; that stretch reads VKYTPDQARA…IIFAENFRSS (475 aa). An ATP-binding site is contributed by 24–31; the sequence is ASAGSGKT. Residues 505 to 788 form the UvrD-like helicase C-terminal domain; the sequence is GQLKFAAGYD…KLMTIHASKG (284 aa).

The protein belongs to the helicase family. AddA subfamily. As to quaternary structure, heterodimer of AddA and AddB/RexB. Mg(2+) is required as a cofactor.

The catalysed reaction is Couples ATP hydrolysis with the unwinding of duplex DNA by translocating in the 3'-5' direction.. It carries out the reaction ATP + H2O = ADP + phosphate + H(+). The heterodimer acts as both an ATP-dependent DNA helicase and an ATP-dependent, dual-direction single-stranded exonuclease. Recognizes the chi site generating a DNA molecule suitable for the initiation of homologous recombination. The AddA nuclease domain is required for chi fragment generation; this subunit has the helicase and 3' -&gt; 5' nuclease activities. This chain is ATP-dependent helicase/nuclease subunit A, found in Lactobacillus delbrueckii subsp. bulgaricus (strain ATCC 11842 / DSM 20081 / BCRC 10696 / JCM 1002 / NBRC 13953 / NCIMB 11778 / NCTC 12712 / WDCM 00102 / Lb 14).